The sequence spans 927 residues: Lysine-specific demethylase JMJ28 (927 aa).

The WRC domain occupies 7–52 (VPDEFRCNRSDGKQWRCKRRALEGKKMCESHHSQQSLKRSKQKVAE). Residues 30–37 (GKKMCESH) carry the Nuclear localization signal 1 motif. The disordered stretch occupies residues 30–92 (GKKMCESHHS…RLGKSKRKRV (63 aa)). The span at 80–91 (RSKRLGKSKRKR) shows a compositional bias: basic residues. The Nuclear localization signal 2 signature appears at 127-134 (EKRKRLPN). Residues Cys227, Cys230, Cys241, Cys244, Cys250, Cys253, Cys269, and Cys272 each contribute to the Zn(2+) site. An RING-type; degenerate zinc finger spans residues 227-273 (CHWCGTRGFGDLISCLSCEREFFCIDCIEKRNKGSKEEVEKKCPVCR). Over residues 330-339 (ENDAEKKEGN) the composition is skewed to basic and acidic residues. Disordered stretches follow at residues 330-359 (ENDA…QPCS) and 701-736 (RSKN…SQHC). In terms of domain architecture, JmjC spans 601–881 (FPNHYAEILN…ESIKRVKELN (281 aa)).

This sequence belongs to the JARID1 histone demethylase family. In terms of assembly, interacts with the FBH transcription factors FBH1, FBH2, FBH3 and FBH4. Requires Fe(2+) as cofactor. In terms of tissue distribution, expressed in inflorescences, flowers, roots, siliques, leaves and stems, especially in the vasculature (mainly phloem), with highest levels in floral organs. Present at high levels in flowers, shoot apex and young seeds, but observed at low levels in dry seeds, root apex and anthers.

Its subcellular location is the nucleus. In terms of biological role, may function as histone H3 lysine demethylase and be involved in regulation of gene expression. Regulates flowering time by promoting CONSTANS (CO) and CONSTANS-LIKE genes (e.g. COL2 and COL5) expression via interaction with FBH transcription factors (FBH1, FBH2, FBH3 and FBH4) at their loci to remove H3K9me2 repressive histone marks. Also modulates the expression of several developmental genes such as MYB30, TFS1, AGL6 and RVE2. The chain is Lysine-specific demethylase JMJ28 from Arabidopsis thaliana (Mouse-ear cress).